The sequence spans 236 residues: B-cell antigen receptor complex-associated protein alpha chain (236 aa).

A signal peptide spans 1–32 (MPGGPGLLQALCATTFLLFLISAGGLGPGSQA). Positions 33-122 (LWVDGGPPSM…EKDLNQKILS (90 aa)) constitute an Ig-like C2-type domain. Residues 33–151 (LWVDGGPPSM…LDMGEGTKNN (119 aa)) lie on the Extracellular side of the membrane. A disulfide bridge connects residues cysteine 54 and cysteine 109. N-linked (GlcNAc...) asparagine glycosylation is found at asparagine 66 and asparagine 76. The chain crosses the membrane as a helical span at residues 152 to 172 (IITAEGIILLFCAVVPGTLLL). The Cytoplasmic portion of the chain corresponds to 173–236 (FRKRWQNMKF…GDGDVQLEKP (64 aa)). The region spanning 185–213 (DAQDDYEDENLYEGLNLDDCSMYEDISRG) is the ITAM domain. Tyrosine 196 carries the phosphotyrosine; by SRC-type Tyr-kinases modification. Tyrosine 207 is modified (phosphotyrosine). Arginine 212 carries the asymmetric dimethylarginine; by PRMT1 modification. Phosphotyrosine; by Tyr-kinases is present on tyrosine 218.

In terms of assembly, heterodimer of alpha and beta chains; disulfide-linked. Part of the B-cell antigen receptor complex where the alpha/beta chain heterodimer is non-covalently associated with an antigen-specific membrane-bound surface immunoglobulin of two heavy chains and two light chains. Interacts through its phosphorylated ITAM domain with the SH2 domains of SYK which stimulates SYK autophosphorylation and activation. Also interacts, when phosphorylated on Tyr-207, with the SH2 domain of BLNK/SLP65, bringing BLNK into proximity with SYK and allowing SYK to phosphorylate BLNK which is necessary for trafficking of the BCR to late endosomes. Interacts with Src-family tyrosine kinases including FYN and LYN, increasing their activity. Phosphorylated on tyrosine, serine and threonine residues upon B-cell activation. Phosphorylation of tyrosine residues by Src-family kinases, including LYN, is an early and essential feature of the BCR signaling cascade. The phosphorylated tyrosines serve as docking sites for SH2-domain containing kinases, leading to their activation which in turn leads to phosphorylation of downstream targets. Phosphorylation of serine and threonine residues may prevent subsequent tyrosine phosphorylation. In terms of processing, arginine methylation in the ITAM domain may interfere with the binding of SYK. It promotes signals leading to B-cell differentiation.

It is found in the cell membrane. Required in cooperation with CD79B for initiation of the signal transduction cascade activated by binding of antigen to the B-cell antigen receptor complex (BCR) which leads to internalization of the complex, trafficking to late endosomes and antigen presentation. Also required for BCR surface expression and for efficient differentiation of pro- and pre-B-cells. Stimulates SYK autophosphorylation and activation. Binds to BLNK, bringing BLNK into proximity with SYK and allowing SYK to phosphorylate BLNK. Also interacts with and increases activity of some Src-family tyrosine kinases. Represses BCR signaling during development of immature B-cells. The chain is B-cell antigen receptor complex-associated protein alpha chain (CD79A) from Canis lupus familiaris (Dog).